Reading from the N-terminus, the 382-residue chain is ATP phosphoribosyltransferase regulatory subunit (382 aa).

The protein belongs to the class-II aminoacyl-tRNA synthetase family. HisZ subfamily. Heteromultimer composed of HisG and HisZ subunits.

It localises to the cytoplasm. Its pathway is amino-acid biosynthesis; L-histidine biosynthesis; L-histidine from 5-phospho-alpha-D-ribose 1-diphosphate: step 1/9. Functionally, required for the first step of histidine biosynthesis. May allow the feedback regulation of ATP phosphoribosyltransferase activity by histidine. In Acidovorax ebreus (strain TPSY) (Diaphorobacter sp. (strain TPSY)), this protein is ATP phosphoribosyltransferase regulatory subunit.